The primary structure comprises 59 residues: Large ribosomal subunit protein uL30 (59 aa).

The protein belongs to the universal ribosomal protein uL30 family. In terms of assembly, part of the 50S ribosomal subunit.

In Alteromonas mediterranea (strain DSM 17117 / CIP 110805 / LMG 28347 / Deep ecotype), this protein is Large ribosomal subunit protein uL30.